The sequence spans 169 residues: Peptide methionine sulfoxide reductase MsrA (169 aa).

Cys10 is an active-site residue.

This sequence belongs to the MsrA Met sulfoxide reductase family.

It carries out the reaction L-methionyl-[protein] + [thioredoxin]-disulfide + H2O = L-methionyl-(S)-S-oxide-[protein] + [thioredoxin]-dithiol. It catalyses the reaction [thioredoxin]-disulfide + L-methionine + H2O = L-methionine (S)-S-oxide + [thioredoxin]-dithiol. Has an important function as a repair enzyme for proteins that have been inactivated by oxidation. Catalyzes the reversible oxidation-reduction of methionine sulfoxide in proteins to methionine. This Streptococcus equi subsp. equi (strain 4047) protein is Peptide methionine sulfoxide reductase MsrA.